The primary structure comprises 303 residues: Ribosomal RNA small subunit methyltransferase H (303 aa).

S-adenosyl-L-methionine is bound by residues 32-34 (GGH), aspartate 52, phenylalanine 78, aspartate 99, and glutamine 106.

Belongs to the methyltransferase superfamily. RsmH family.

The protein localises to the cytoplasm. The enzyme catalyses cytidine(1402) in 16S rRNA + S-adenosyl-L-methionine = N(4)-methylcytidine(1402) in 16S rRNA + S-adenosyl-L-homocysteine + H(+). Specifically methylates the N4 position of cytidine in position 1402 (C1402) of 16S rRNA. This Acinetobacter baylyi (strain ATCC 33305 / BD413 / ADP1) protein is Ribosomal RNA small subunit methyltransferase H.